We begin with the raw amino-acid sequence, 556 residues long: Zinc finger protein GLI1 (556 aa).

Disordered regions lie at residues 57–83 (TEHPGGAADGSRFSTPRGAGKLGKKRA), 133–178 (SLGY…TPAR), and 200–222 (KYPEEKSEGDISSPASTGTQDPL). Low complexity predominate over residues 135-148 (GYQNPPGQQKGQGQ). 5 C2H2-type zinc fingers span residues 247–272 (TNCYWDGCAKEFDTQEQLVHHINNEH), 280–307 (FVCHWAACSREQRPFKAQYMLVVHMRRH), 313–337 (HKCTFEGCNKAYSRLENLKTHLRSH), 343–368 (YVCEHEGCNKAFSNASDRAKHQNRTH), and 374–399 (YICKIPGCTKRYTDPSSLRKHVKTVH). The interval 295-303 (KAQYMLVVH) is interaction with DNA. 2 interaction with DNA regions span residues 357 to 362 (ASDRAK) and 387 to 393 (DPSSLRK). The tract at residues 387 to 492 (DPSSLRKHVK…VEMTGNTGGS (106 aa)) is disordered. The segment covering 454-472 (SKPQPSPGGQSSCSSDRSP) has biased composition (low complexity).

Belongs to the GLI C2H2-type zinc-finger protein family.

It localises to the cytoplasm. The protein localises to the nucleus. Its function is as follows. Acts as a transcriptional activator. Binds to the DNA consensus sequence 5'-GACCACCCA-3'. May regulate the transcription of specific genes during normal development. May play a role in craniofacial development and digital development, as well as development of the central nervous system and gastrointestinal tract. Mediates SHH signaling. Plays a role in cell proliferation and differentiation via its role in SHH signaling. This chain is Zinc finger protein GLI1 (GLI1), found in Gallus gallus (Chicken).